The chain runs to 103 residues: uncharacterized protein (103 aa).

The helical transmembrane segment at 35-57 (PFVSMFQTFLEVLTATVLAFTAY) threads the bilayer.

It is found in the host membrane. This is an uncharacterized protein from Acidianus bottle-shaped virus (isolate Italy/Pozzuoli) (ABV).